Here is a 213-residue protein sequence, read N- to C-terminus: Uridine kinase (213 aa).

15 to 22 (GASASGKS) contributes to the ATP binding site.

This sequence belongs to the uridine kinase family.

The protein resides in the cytoplasm. It catalyses the reaction uridine + ATP = UMP + ADP + H(+). The enzyme catalyses cytidine + ATP = CMP + ADP + H(+). The protein operates within pyrimidine metabolism; CTP biosynthesis via salvage pathway; CTP from cytidine: step 1/3. It functions in the pathway pyrimidine metabolism; UMP biosynthesis via salvage pathway; UMP from uridine: step 1/1. The chain is Uridine kinase from Proteus mirabilis (strain HI4320).